Consider the following 434-residue polypeptide: CBL-interacting protein kinase 15 (434 aa).

Residues 12-267 (YELGRLLGKG…IQKIKESTWF (256 aa)) enclose the Protein kinase domain. Residues 18-26 (LGKGTFGKV) and Lys-41 contribute to the ATP site. The active-site Proton acceptor is Asp-135. The segment at 153-182 (DFGLSALSESKRQDGLLHTTCGTPAYVAPE) is activation loop. An NAF domain is found at 298–333 (RKKNAHEDVKPMSVTNLNAFEIISFSKGFDLSGMFI). The interval 338-367 (RNEARFTSDKSASTIISKLEDVAKALNLRV) is PPI.

It belongs to the protein kinase superfamily. CAMK Ser/Thr protein kinase family. SNF1 subfamily. The cofactor is Mn(2+).

The catalysed reaction is L-seryl-[protein] + ATP = O-phospho-L-seryl-[protein] + ADP + H(+). The enzyme catalyses L-threonyl-[protein] + ATP = O-phospho-L-threonyl-[protein] + ADP + H(+). Functionally, involved in salt stress tolerance. CIPK serine-threonine protein kinases interact with CBL proteins. Binding of a CBL protein to the regulatory NAF domain of CIPK protein lead to the activation of the kinase in a calcium-dependent manner. In Oryza sativa subsp. japonica (Rice), this protein is CBL-interacting protein kinase 15 (CIPK15).